Consider the following 249-residue polypeptide: Secreted flagellin C (249 aa).

Interacts with FliS.

It is found in the secreted. Might play a role in virulence. The polypeptide is Secreted flagellin C (flaC) (Campylobacter jejuni subsp. jejuni serotype O:6 (strain 81116 / NCTC 11828)).